A 379-amino-acid polypeptide reads, in one-letter code: Cytochrome b (379 aa).

4 helical membrane-spanning segments follow: residues F33–M53, W77–I98, W113–L133, and F178–L198. 2 residues coordinate heme b: H83 and H97. Residues H182 and H196 each coordinate heme b. Residue H201 coordinates a ubiquinone. 4 consecutive transmembrane segments (helical) span residues Y226–Y246, L288–H308, I320–G340, and Y347–P367.

Belongs to the cytochrome b family. As to quaternary structure, the cytochrome bc1 complex contains 3 respiratory subunits (MT-CYB, CYC1 and UQCRFS1), 2 core proteins (UQCRC1 and UQCRC2) and probably 6 low-molecular weight proteins. Heme b is required as a cofactor.

It localises to the mitochondrion inner membrane. In terms of biological role, component of the ubiquinol-cytochrome c reductase complex (complex III or cytochrome b-c1 complex) that is part of the mitochondrial respiratory chain. The b-c1 complex mediates electron transfer from ubiquinol to cytochrome c. Contributes to the generation of a proton gradient across the mitochondrial membrane that is then used for ATP synthesis. In Anguilla mossambica (African longfin eel), this protein is Cytochrome b (mt-cyb).